The chain runs to 765 residues: Nucleolar transcription factor 1 (765 aa).

An N-acetylmethionine modification is found at methionine 1. The tract at residues 1 to 21 (MNGEADCPTDLEMAAPKGQDR) is disordered. DNA-binding regions (HMG box) lie at residues 112 to 180 (PKKP…ARFR) and 196 to 264 (PEKP…RDYI). Threonine 201 bears the Phosphothreonine mark. Phosphoserine is present on residues serine 273, serine 336, and serine 364. A DNA-binding region (HMG box 3) is located at residues 298–362 (TKPPPNSYSL…DYEVELLRFL (65 aa)). Residues 370–379 (QQRVLGEEKM) are compositionally biased toward basic and acidic residues. The segment at 370–411 (QQRVLGEEKMLNINKKQTTSPASKKPSQEGGKGGSEKPKRPV) is disordered. Phosphoserine occurs at positions 389, 412, 433, 435, 484, 495, 546, 584, and 638. DNA-binding regions (HMG box) lie at residues 407-475 (PKRP…GGER), 482-549 (PESP…SEMR), and 568-634 (KKPP…DLWV). Residues 456 to 487 (YKAREAALKAQSERKPGGEREDRGKLPESPKR) form a disordered region. Positions 457–487 (KAREAALKAQSERKPGGEREDRGKLPESPKR) are enriched in basic and acidic residues. The tract at residues 546 to 576 (SEMRAPPAATNSSKKMKFQGEPKKPPMNGYQ) is disordered. Residues 649–765 (ISNKRKNMTK…SGDSSDSGSN (117 aa)) form a disordered region. Positions 664-674 (PKSSRTTLQSK) are enriched in polar residues. Positions 677–746 (SEEDDDEEEE…DDDEDEDNES (70 aa)) are enriched in acidic residues. Residues 747–765 (EGSSSSSSSSGDSSDSGSN) show a composition bias toward low complexity.

In terms of assembly, homodimer. Part of Pol I pre-initiation complex (PIC), in which Pol I core assembles with RRN3 and promoter-bound UTBF and SL1/TIF-IB complex. Interacts with TOP2A in the context of Pol I complex. Interacts with TBP. Interacts with TAF1A. Interacts with RASL11A. Binds to IRS1 and PIK3CA. Interacts with DHX33. Interacts with PHF6. Interacts with CEBPA (isoform 1 and isoform 4). Interacts with DDX11. Interacts with NOP53. Interacts with ALKBH2. In terms of processing, phosphorylated and activated by PIK3CA.

It localises to the nucleus. It is found in the nucleolus. In terms of biological role, recognizes the ribosomal RNA gene promoter and activates transcription mediated by RNA polymerase I through cooperative interactions with the transcription factor SL1/TIF-IB complex. It binds specifically to the upstream control element. The chain is Nucleolar transcription factor 1 (Ubtf) from Mus musculus (Mouse).